The following is a 353-amino-acid chain: MAKIALKDVRKVYGGNVEAIKSVSMEIADGEMIVLVGPSGCGKSTLLRMIAGLEGISGGQIMIGDRVVNDLEPSDRDIAMVFQNYALYPHMTVRQNLAYGLKNRNTPKEEIERRITEAAKALEIEQFLERKPRQLSGGQRQRVAMGRAIVRKPAAFLFDEPLSNLDAKLRVQMRVEIRRLQRSLATTSVYVTHDQMEAMTLADRLVVLNAGRIEQMGTPIELYEKPATTFVATFIGSPSMNLLAHGAASSNVSAGWSVNAAAALPPTVATLGIRPEDITLAEAEPADAAFAGTVQVDAVELVGAESYVHGSFPDGTTIVFRVPGRSQLRIGEMLKIAAQAKDFHLFDAAGKRI.

The ABC transporter domain maps to 4-235 (IALKDVRKVY…PATTFVATFI (232 aa)). Residue 37–44 (GPSGCGKS) participates in ATP binding.

The protein belongs to the ABC transporter superfamily. sn-glycerol-3-phosphate importer (TC 3.A.1.1.3) family. As to quaternary structure, the complex is composed of two ATP-binding proteins (UgpC), two transmembrane proteins (UgpA and UgpE) and a solute-binding protein (UgpB).

The protein resides in the cell inner membrane. The enzyme catalyses sn-glycerol 3-phosphate(out) + ATP + H2O = sn-glycerol 3-phosphate(in) + ADP + phosphate + H(+). Its function is as follows. Part of the ABC transporter complex UgpBAEC involved in sn-glycerol-3-phosphate (G3P) import. Responsible for energy coupling to the transport system. The sequence is that of sn-glycerol-3-phosphate import ATP-binding protein UgpC 3 from Agrobacterium fabrum (strain C58 / ATCC 33970) (Agrobacterium tumefaciens (strain C58)).